A 156-amino-acid polypeptide reads, in one-letter code: Transcription factor E (156 aa).

The HTH TFE/IIEalpha-type domain occupies 1–72 (MYGEKAKKVL…LWILNIDQIE (72 aa)).

The protein belongs to the TFE family. Monomer. Interaction with RNA polymerase subunits RpoF and RpoE is necessary for Tfe stimulatory transcription activity. Able to interact with Tbp and RNA polymerase in the absence of DNA promoter. Interacts both with the preinitiation and elongation complexes.

In terms of biological role, transcription factor that plays a role in the activation of archaeal genes transcribed by RNA polymerase. Facilitates transcription initiation by enhancing TATA-box recognition by TATA-box-binding protein (Tbp), and transcription factor B (Tfb) and RNA polymerase recruitment. Not absolutely required for transcription in vitro, but particularly important in cases where Tbp or Tfb function is not optimal. It dynamically alters the nucleic acid-binding properties of RNA polymerases by stabilizing the initiation complex and destabilizing elongation complexes. Seems to translocate with the RNA polymerase following initiation and acts by binding to the non template strand of the transcription bubble in elongation complexes. This chain is Transcription factor E, found in Staphylothermus marinus (strain ATCC 43588 / DSM 3639 / JCM 9404 / F1).